The primary structure comprises 1029 residues: Toll-like receptor 9 (1029 aa).

Residues 1–24 (MGPYCAPHPLSLLVQAAALAAALA) form the signal peptide. The Extracellular portion of the chain corresponds to 25–815 (EGTLPAFLPC…LCLDETLSLD (791 aa)). Cysteine 34 and cysteine 44 form a disulfide bridge. 46–50 (WLFLK) is a binding site for DNA. 26 LRR repeats span residues 61–84 (RANV…DFVH), 86–109 (SNLR…HFPC), 121–146 (VPTL…SLVS), 149–165 (LSHT…FTGL), 166–189 (HALR…ALEV), 197–220 (LGNL…LPPS), 222–241 (DTLL…DLAN), 242–267 (LTAL…CREC), 282–305 (LSRL…WFRG), 307–331 (GRLQ…IFND), 332–355 (LTQL…HLHL), 362–385 (LVSL…TLQS), 389–412 (LPKL…IFGA), 414–439 (PSLL…LGEV), 469–492 (CNLN…MFTR), 494–517 (SRLQ…QFVP), 518–541 (LTSL…SFTE), 543–570 (PQLE…SFVA), 572–596 (LPSL…LSSA), 598–620 (LRAL…LYLC), 625–648 (LRNL…HLDN), 650–673 (PKSL…SLTV), 674–697 (LPRL…SLPP), 699–721 (IRLQ…FFVR), 722–745 (ATRL…WFGS), and 747–770 (AGTL…AFVD). An N-linked (GlcNAc...) asparagine glycan is attached at asparagine 63. Residues 71–76 (SNRIHH) and 94–108 (KWNC…MHFP) each bind DNA. Cysteines 97 and 109 form a disulfide. Residue asparagine 128 is glycosylated (N-linked (GlcNAc...) asparagine). Residue tyrosine 131 participates in DNA binding. A disulfide bridge links cysteine 177 with cysteine 183. Residue 178 to 180 (YYM) participates in DNA binding. The N-linked (GlcNAc...) asparagine glycan is linked to asparagine 199. Tyrosine 207 is a binding site for DNA. Asparagine 209 and asparagine 241 each carry an N-linked (GlcNAc...) asparagine glycan. Cystine bridges form between cysteine 254-cysteine 267 and cysteine 257-cysteine 264. Cysteine 257 is lipidated: S-palmitoyl cysteine. Arginine 261 contributes to the DNA binding site. The S-palmitoyl cysteine moiety is linked to residue cysteine 264. 2 N-linked (GlcNAc...) asparagine glycosylation sites follow: asparagine 339 and asparagine 380. Cysteine 469 and cysteine 498 are joined by a disulfide. Asparagine 472 and asparagine 511 each carry an N-linked (GlcNAc...) asparagine glycan. N-linked (GlcNAc...) asparagine glycosylation is present at asparagine 565. Asparagine 667 and asparagine 692 each carry an N-linked (GlcNAc...) asparagine glycan. N-linked (GlcNAc...) asparagine glycosylation is present at asparagine 729. Disulfide bonds link cysteine 762/cysteine 788 and cysteine 764/cysteine 807. Residues 816–836 (CFGLSLLMVALGLAVPMLHHL) traverse the membrane as a helical segment. Topologically, residues 837–1029 (CGWDLWYCFH…NFCRGPTTAE (193 aa)) are cytoplasmic. The TIR domain maps to 864 to 1009 (LLYDAVVVFD…SFWANLGIAL (146 aa)).

This sequence belongs to the Toll-like receptor family. As to quaternary structure, monomer and homodimer. Exists as a monomer in the absence of unmethylated cytidine-phosphate-guanosine (CpG) ligand. Proteolytic processing of an insertion loop (Z-loop) is required for homodimerization upon binding to the unmethylated CpG ligand leading to its activation. Interacts with MYD88 via their respective TIR domains. Interacts with BTK. Interacts (via transmembrane domain) with UNC93B1. Interacts with CD300LH; the interaction may promote full activation of TLR9-triggered innate responses. Interacts with CNPY3 and HSP90B1; this interaction is required for proper folding in the endoplasmic reticulum. Interacts with SMPDL3B. Interacts with CD82; this interaction is essential for TLR9-dependent myddosome formation in response to CpG stimulation. In terms of processing, activated by proteolytic cleavage of the flexible loop between repeats LRR14 and LRR15 within the ectodomain. Cleavage requires UNC93B1. Proteolytically processed by first removing the majority of the ectodomain by either asparagine endopeptidase (AEP) or a cathepsin followed by a trimming event that is solely cathepsin mediated and required for optimal receptor signaling. Post-translationally, palmitoylated by ZDHHC3 in the Golgi regulates TLR9 trafficking from the Golgi to endosomes. Depalmitoylation by PPT1 controls the release of TLR9 from UNC93B1 in endosomes.

It localises to the endoplasmic reticulum membrane. The protein localises to the endosome. It is found in the lysosome. The protein resides in the cytoplasmic vesicle. Its subcellular location is the phagosome. Its function is as follows. Key component of innate and adaptive immunity. TLRs (Toll-like receptors) control host immune response against pathogens through recognition of molecular patterns specific to microorganisms. TLR9 is a nucleotide-sensing TLR which is activated by unmethylated cytidine-phosphate-guanosine (CpG) dinucleotides. Acts via MYD88 and TRAF6, leading to NF-kappa-B activation, cytokine secretion and the inflammatory response. Upon CpG stimulation, induces B-cell proliferation, activation, survival and antibody production. The polypeptide is Toll-like receptor 9 (TLR9) (Bos taurus (Bovine)).